The primary structure comprises 175 residues: Alpha-crystallin B chain (175 aa).

Methionine 1 carries the N-acetylmethionine modification. Serine 19 carries the post-translational modification Phosphoserine. A glycan (O-linked (GlcNAc) serine) is linked at serine 41. Phosphoserine is present on residues serine 45 and serine 59. The region spanning 56–164 (RAPSWIDTGL…PERTIPITRE (109 aa)) is the sHSP domain. Histidine 83 is a binding site for Zn(2+). Lysine 92 carries the N6-acetyllysine modification. Histidine 104, glutamate 106, histidine 111, and histidine 119 together coordinate Zn(2+). The disordered stretch occupies residues 142–175 (VLTVNGPRKQASGPERTIPITREEKPAVTAAPKK). Lysine 166 bears the N6-acetyllysine mark. A glycan (O-linked (GlcNAc) threonine) is linked at threonine 170.

Belongs to the small heat shock protein (HSP20) family. As to quaternary structure, heteromer composed of three CRYAA and one CRYAB subunits. Aggregates with homologous proteins, including the small heat shock protein HSPB1, to form large heteromeric complexes. Inter-subunit bridging via zinc ions enhances stability, which is crucial as there is no protein turn over in the lens. Interacts with HSPBAP1 and TTN/titin. Interacts with TMEM109; in the cellular response to DNA damage. Interacts with DES; binds rapidly during early stages of DES filament assembly and a reduced binding seen in the later stages. Interacts with ATP6V1A and with MTOR, forming a ternary complex. In terms of tissue distribution, lens as well as other tissues.

The protein localises to the cytoplasm. The protein resides in the nucleus. It localises to the secreted. It is found in the lysosome. Its function is as follows. May contribute to the transparency and refractive index of the lens. Has chaperone-like activity, preventing aggregation of various proteins under a wide range of stress conditions. In lens epithelial cells, stabilizes the ATP6V1A protein, preventing its degradation by the proteasome. This chain is Alpha-crystallin B chain (CRYAB), found in Spalax judaei (Judean Mountains blind mole rat).